Reading from the N-terminus, the 616-residue chain is Proline--tRNA ligase (616 aa).

It belongs to the class-II aminoacyl-tRNA synthetase family. ProS type 1 subfamily. In terms of assembly, homodimer.

Its subcellular location is the cytoplasm. The catalysed reaction is tRNA(Pro) + L-proline + ATP = L-prolyl-tRNA(Pro) + AMP + diphosphate. In terms of biological role, catalyzes the attachment of proline to tRNA(Pro) in a two-step reaction: proline is first activated by ATP to form Pro-AMP and then transferred to the acceptor end of tRNA(Pro). As ProRS can inadvertently accommodate and process non-cognate amino acids such as alanine and cysteine, to avoid such errors it has two additional distinct editing activities against alanine. One activity is designated as 'pretransfer' editing and involves the tRNA(Pro)-independent hydrolysis of activated Ala-AMP. The other activity is designated 'posttransfer' editing and involves deacylation of mischarged Ala-tRNA(Pro). The misacylated Cys-tRNA(Pro) is not edited by ProRS. This Lactococcus lactis subsp. cremoris (strain SK11) protein is Proline--tRNA ligase.